A 352-amino-acid polypeptide reads, in one-letter code: Holliday junction branch migration complex subunit RuvB (352 aa).

The segment at 1 to 181 (MTDRIVGAAK…FGIPVRLHFY (181 aa)) is large ATPase domain (RuvB-L). Residues Leu-20, Arg-21, Gly-62, Lys-65, Thr-66, Thr-67, 128–130 (EDF), Arg-171, Tyr-181, and Arg-218 each bind ATP. Thr-66 contributes to the Mg(2+) binding site. The interval 182-252 (EVAELEGIVR…AADKALQRLE (71 aa)) is small ATPAse domain (RuvB-S). Residues 255–352 (ELGLDALDHR…FDGDEENGSA (98 aa)) form a head domain (RuvB-H) region. Residues Arg-291, Arg-310, and Arg-315 each contribute to the DNA site.

It belongs to the RuvB family. As to quaternary structure, homohexamer. Forms an RuvA(8)-RuvB(12)-Holliday junction (HJ) complex. HJ DNA is sandwiched between 2 RuvA tetramers; dsDNA enters through RuvA and exits via RuvB. An RuvB hexamer assembles on each DNA strand where it exits the tetramer. Each RuvB hexamer is contacted by two RuvA subunits (via domain III) on 2 adjacent RuvB subunits; this complex drives branch migration. In the full resolvosome a probable DNA-RuvA(4)-RuvB(12)-RuvC(2) complex forms which resolves the HJ.

The protein localises to the cytoplasm. The catalysed reaction is ATP + H2O = ADP + phosphate + H(+). The RuvA-RuvB-RuvC complex processes Holliday junction (HJ) DNA during genetic recombination and DNA repair, while the RuvA-RuvB complex plays an important role in the rescue of blocked DNA replication forks via replication fork reversal (RFR). RuvA specifically binds to HJ cruciform DNA, conferring on it an open structure. The RuvB hexamer acts as an ATP-dependent pump, pulling dsDNA into and through the RuvAB complex. RuvB forms 2 homohexamers on either side of HJ DNA bound by 1 or 2 RuvA tetramers; 4 subunits per hexamer contact DNA at a time. Coordinated motions by a converter formed by DNA-disengaged RuvB subunits stimulates ATP hydrolysis and nucleotide exchange. Immobilization of the converter enables RuvB to convert the ATP-contained energy into a lever motion, pulling 2 nucleotides of DNA out of the RuvA tetramer per ATP hydrolyzed, thus driving DNA branch migration. The RuvB motors rotate together with the DNA substrate, which together with the progressing nucleotide cycle form the mechanistic basis for DNA recombination by continuous HJ branch migration. Branch migration allows RuvC to scan DNA until it finds its consensus sequence, where it cleaves and resolves cruciform DNA. The protein is Holliday junction branch migration complex subunit RuvB of Parvibaculum lavamentivorans (strain DS-1 / DSM 13023 / NCIMB 13966).